We begin with the raw amino-acid sequence, 71 residues long: Vitellogenin-A1 (71 aa).

The signal sequence occupies residues 1 to 15 (MRGIILALLLAIAGS). The 48-residue stretch at 24–71 (FSESKTSVYNYEAVILNGFPESGLSRAGIKINCKVEISAYAQRSYFLK) folds into the Vitellogenin domain.

Produced by the liver, secreted into the blood and then sequestered by receptor mediated endocytosis into growing oocytes, where it is generally cleaved, giving rise to the respective yolk components.

In terms of biological role, precursor of the major egg-yolk proteins that are sources of nutrients during early development of oviparous organisms. This Xenopus laevis (African clawed frog) protein is Vitellogenin-A1.